Reading from the N-terminus, the 719-residue chain is Ferric reductase transmembrane component 4 (719 aa).

The first 18 residues, 1 to 18 (MLLVHIISFLLFFQLSAA), serve as a signal peptide directing secretion. Topologically, residues 19 to 156 (KAPPSKTSLI…YGYYYNHDIP (138 aa)) are extracellular. Residues Asn51, Asn80, Asn101, Asn113, Asn127, and Asn135 are each glycosylated (N-linked (GlcNAc...) asparagine). Residues 157–177 (YYFGGIICAYFVGVMLLAGLI) traverse the membrane as a helical segment. The Cytoplasmic portion of the chain corresponds to 178-228 (RFLNYTPIKKIMFQQKLVNYVRGYTTLPTLYEKHAEPFSYLKVITGYLPTR). Residues 229-249 (FETLVILGYLILHTIFMAYKY) form a helical membrane-spanning segment. At 250 to 267 (QYDPYHIIFAAHRAEVAH) the chain is on the extracellular side. Residues 268–288 (FVAYRSGILSFAHLPLIVLFA) traverse the membrane as a helical segment. Residues 273–407 (SGILSFAHLP…SGIEWIYAAI (135 aa)) form the Ferric oxidoreductase domain. At 289-304 (GRNNFLQLISGLKHTS) the chain is on the cytoplasmic side. The helical transmembrane segment at 305-325 (FIVFHKWLGRMMFLDAIIHAA) threads the bilayer. The heme site is built by His309 and His323. Residues 326-346 (GFTNYYLYYKKWNTVRLRVYW) lie on the Extracellular side of the membrane. Residues 347 to 367 (KFGIATTCLAGMLIFFSIAAF) traverse the membrane as a helical segment. At 368–373 (RRHYYE) the chain is on the cytoplasmic side. A helical transmembrane segment spans residues 374–394 (TFMALHIVFAALFLYTCWEHV). Heme contacts are provided by His379 and His393. Position 395 (Thr395) is a topological domain, extracellular. Residues 396–416 (NFSGIEWIYAAIAIWGVDRIV) form a helical membrane-spanning segment. Positions 408–527 (AIWGVDRIVR…EGPYGSKSTA (120 aa)) constitute an FAD-binding FR-type domain. Residues 417–719 (RITRIALLGF…IEYLEEYQAW (303 aa)) are Cytoplasmic-facing. Residue 472 to 478 (HPFTVMD) participates in FAD binding. 519 to 522 (GPYG) contributes to the NADP(+) binding site. Composition is skewed to polar residues over residues 606–618 (EKIS…NGET) and 625–643 (SSLS…TELP). The disordered stretch occupies residues 606 to 643 (EKISSNEVKNGETTAEKAPSSLSNSEKAPSESENTELP). 685–686 (CG) is an NADP(+) binding site.

Belongs to the ferric reductase (FRE) family. FAD is required as a cofactor.

It is found in the cell membrane. It catalyses the reaction 2 a Fe(II)-siderophore + NADP(+) + H(+) = 2 a Fe(III)-siderophore + NADPH. Functionally, siderophore-iron reductase responsible for reducing extracellular iron prior to import. Catalyzes the reductive uptake of Fe(3+) bound to dihydroxamate rhodotorulic acid. Fe(3+) is reduced to Fe(2+), which then dissociates from the siderophore and can be imported by the high-affinity Fe(2+) transport complex in the plasma membrane. The polypeptide is Ferric reductase transmembrane component 4 (FRE4) (Saccharomyces cerevisiae (strain ATCC 204508 / S288c) (Baker's yeast)).